The following is a 358-amino-acid chain: Molybdenum import ATP-binding protein ModC (358 aa).

One can recognise an ABC transporter domain in the interval 3–228; sequence INVKQKLGDL…LEMRPWLPAK (226 aa). 30 to 37 serves as a coordination point for ATP; sequence GRSGAGKT. Positions 289 to 356 constitute a Mop domain; sequence QTSIRNVLLA…IKGVSVTKDD (68 aa).

It belongs to the ABC transporter superfamily. Molybdate importer (TC 3.A.1.8) family. The complex is composed of two ATP-binding proteins (ModC), two transmembrane proteins (ModB) and a solute-binding protein (ModA).

Its subcellular location is the cell inner membrane. It carries out the reaction molybdate(out) + ATP + H2O = molybdate(in) + ADP + phosphate + H(+). Functionally, part of the ABC transporter complex ModABC involved in molybdenum import. Responsible for energy coupling to the transport system. This Photobacterium profundum (strain SS9) protein is Molybdenum import ATP-binding protein ModC.